Here is a 618-residue protein sequence, read N- to C-terminus: Dihydroxy-acid dehydratase (618 aa).

Aspartate 81 contacts Mg(2+). Residue cysteine 122 participates in [2Fe-2S] cluster binding. Residues aspartate 123 and lysine 124 each coordinate Mg(2+). An N6-carboxylysine modification is found at lysine 124. Cysteine 199 contacts [2Fe-2S] cluster. Glutamate 495 contributes to the Mg(2+) binding site. Catalysis depends on serine 521, which acts as the Proton acceptor.

The protein belongs to the IlvD/Edd family. Homodimer. [2Fe-2S] cluster serves as cofactor. It depends on Mg(2+) as a cofactor.

The enzyme catalyses (2R)-2,3-dihydroxy-3-methylbutanoate = 3-methyl-2-oxobutanoate + H2O. The catalysed reaction is (2R,3R)-2,3-dihydroxy-3-methylpentanoate = (S)-3-methyl-2-oxopentanoate + H2O. The protein operates within amino-acid biosynthesis; L-isoleucine biosynthesis; L-isoleucine from 2-oxobutanoate: step 3/4. It functions in the pathway amino-acid biosynthesis; L-valine biosynthesis; L-valine from pyruvate: step 3/4. Functions in the biosynthesis of branched-chain amino acids. Catalyzes the dehydration of (2R,3R)-2,3-dihydroxy-3-methylpentanoate (2,3-dihydroxy-3-methylvalerate) into 2-oxo-3-methylpentanoate (2-oxo-3-methylvalerate) and of (2R)-2,3-dihydroxy-3-methylbutanoate (2,3-dihydroxyisovalerate) into 2-oxo-3-methylbutanoate (2-oxoisovalerate), the penultimate precursor to L-isoleucine and L-valine, respectively. This chain is Dihydroxy-acid dehydratase, found in Blochmanniella floridana.